Reading from the N-terminus, the 96-residue chain is uncharacterized protein (96 aa).

N-linked (GlcNAc...) asparagine glycosylation is present at N4. Residues 59-81 traverse the membrane as a helical segment; the sequence is VFFTIFDTIITIIVRSGIPFPLL.

It localises to the membrane. This is an uncharacterized protein from Saccharomyces cerevisiae (strain ATCC 204508 / S288c) (Baker's yeast).